The sequence spans 352 residues: uncharacterized protein (352 aa).

An N-terminal signal peptide occupies residues 1–21; the sequence is MNVDSRVFRFFLVFLILVVVA.

Belongs to the bacterial solute-binding protein 1 family. WtpA subfamily.

This is an uncharacterized protein from Methanosarcina acetivorans (strain ATCC 35395 / DSM 2834 / JCM 12185 / C2A).